The chain runs to 315 residues: Methionyl-tRNA formyltransferase (315 aa).

117-120 (SLLP) is a binding site for (6S)-5,6,7,8-tetrahydrofolate.

This sequence belongs to the Fmt family.

It catalyses the reaction L-methionyl-tRNA(fMet) + (6R)-10-formyltetrahydrofolate = N-formyl-L-methionyl-tRNA(fMet) + (6S)-5,6,7,8-tetrahydrofolate + H(+). Functionally, attaches a formyl group to the free amino group of methionyl-tRNA(fMet). The formyl group appears to play a dual role in the initiator identity of N-formylmethionyl-tRNA by promoting its recognition by IF2 and preventing the misappropriation of this tRNA by the elongation apparatus. This is Methionyl-tRNA formyltransferase from Methylibium petroleiphilum (strain ATCC BAA-1232 / LMG 22953 / PM1).